A 313-amino-acid polypeptide reads, in one-letter code: Malate dehydrogenase (313 aa).

Residues 8–13 (GAGNVG) and Asp-33 contribute to the NAD(+) site. Positions 83 and 89 each coordinate substrate. Residues Asn-96 and 119–121 (ISN) contribute to the NAD(+) site. Asn-121 and Arg-152 together coordinate substrate. The active-site Proton acceptor is His-176.

The protein belongs to the LDH/MDH superfamily. MDH type 3 family.

It carries out the reaction (S)-malate + NAD(+) = oxaloacetate + NADH + H(+). Functionally, catalyzes the reversible oxidation of malate to oxaloacetate. The protein is Malate dehydrogenase of Bacteroides thetaiotaomicron (strain ATCC 29148 / DSM 2079 / JCM 5827 / CCUG 10774 / NCTC 10582 / VPI-5482 / E50).